Consider the following 94-residue polypeptide: FLLKSQLCYCLFGIELIGAGIHALHEDEIFTVDYCGTNCTKQSNGSWTTCPGNCSCYHEDGKTDGFCLSTEYTDFTQFPNLTSEEMDAATPRPE.

Intrachain disulfides connect Cys35/Cys54, Cys39/Cys56, and Cys50/Cys67. 4 N-linked (GlcNAc...) asparagine glycosylation sites follow: Asn38, Asn44, Asn53, and Asn80.

The protein resides in the secreted. Its function is as follows. Salivary chemokine-binding protein which binds to host chemokines CXCL1, CXCL2, CXCL5 and CXCL8. In Ixodes ricinus (Common tick), this protein is Evasin P1172.